Reading from the N-terminus, the 95-residue chain is Co-chaperonin GroES (95 aa).

Belongs to the GroES chaperonin family. In terms of assembly, heptamer of 7 subunits arranged in a ring. Interacts with the chaperonin GroEL.

It is found in the cytoplasm. Together with the chaperonin GroEL, plays an essential role in assisting protein folding. The GroEL-GroES system forms a nano-cage that allows encapsulation of the non-native substrate proteins and provides a physical environment optimized to promote and accelerate protein folding. GroES binds to the apical surface of the GroEL ring, thereby capping the opening of the GroEL channel. This Bordetella avium (strain 197N) protein is Co-chaperonin GroES.